A 433-amino-acid chain; its full sequence is Serine--tRNA ligase (433 aa).

An L-serine-binding site is contributed by 235–237 (TSE). 266–268 (RSE) lines the ATP pocket. An L-serine-binding site is contributed by glutamate 289. An ATP-binding site is contributed by 353–356 (EISS). Serine 388 lines the L-serine pocket.

The protein belongs to the class-II aminoacyl-tRNA synthetase family. Type-1 seryl-tRNA synthetase subfamily. In terms of assembly, homodimer. The tRNA molecule binds across the dimer.

Its subcellular location is the cytoplasm. It carries out the reaction tRNA(Ser) + L-serine + ATP = L-seryl-tRNA(Ser) + AMP + diphosphate + H(+). It catalyses the reaction tRNA(Sec) + L-serine + ATP = L-seryl-tRNA(Sec) + AMP + diphosphate + H(+). It participates in aminoacyl-tRNA biosynthesis; selenocysteinyl-tRNA(Sec) biosynthesis; L-seryl-tRNA(Sec) from L-serine and tRNA(Sec): step 1/1. In terms of biological role, catalyzes the attachment of serine to tRNA(Ser). Is also able to aminoacylate tRNA(Sec) with serine, to form the misacylated tRNA L-seryl-tRNA(Sec), which will be further converted into selenocysteinyl-tRNA(Sec). The polypeptide is Serine--tRNA ligase (Burkholderia vietnamiensis (strain G4 / LMG 22486) (Burkholderia cepacia (strain R1808))).